The sequence spans 336 residues: Holliday junction branch migration complex subunit RuvB (336 aa).

Positions Met-1 to Tyr-175 are large ATPase domain (RuvB-L). Residues Leu-14, Arg-15, Gly-56, Lys-59, Thr-60, Thr-61, Glu-122 to Phe-124, Arg-165, Tyr-175, and Arg-212 each bind ATP. Mg(2+) is bound at residue Thr-60. A small ATPAse domain (RuvB-S) region spans residues Glu-176–Gly-253. Positions Glu-256–Phe-336 are head domain (RuvB-H). The DNA site is built by Arg-310 and Arg-315.

This sequence belongs to the RuvB family. In terms of assembly, homohexamer. Forms an RuvA(8)-RuvB(12)-Holliday junction (HJ) complex. HJ DNA is sandwiched between 2 RuvA tetramers; dsDNA enters through RuvA and exits via RuvB. An RuvB hexamer assembles on each DNA strand where it exits the tetramer. Each RuvB hexamer is contacted by two RuvA subunits (via domain III) on 2 adjacent RuvB subunits; this complex drives branch migration. In the full resolvosome a probable DNA-RuvA(4)-RuvB(12)-RuvC(2) complex forms which resolves the HJ.

The protein resides in the cytoplasm. The enzyme catalyses ATP + H2O = ADP + phosphate + H(+). Functionally, the RuvA-RuvB-RuvC complex processes Holliday junction (HJ) DNA during genetic recombination and DNA repair, while the RuvA-RuvB complex plays an important role in the rescue of blocked DNA replication forks via replication fork reversal (RFR). RuvA specifically binds to HJ cruciform DNA, conferring on it an open structure. The RuvB hexamer acts as an ATP-dependent pump, pulling dsDNA into and through the RuvAB complex. RuvB forms 2 homohexamers on either side of HJ DNA bound by 1 or 2 RuvA tetramers; 4 subunits per hexamer contact DNA at a time. Coordinated motions by a converter formed by DNA-disengaged RuvB subunits stimulates ATP hydrolysis and nucleotide exchange. Immobilization of the converter enables RuvB to convert the ATP-contained energy into a lever motion, pulling 2 nucleotides of DNA out of the RuvA tetramer per ATP hydrolyzed, thus driving DNA branch migration. The RuvB motors rotate together with the DNA substrate, which together with the progressing nucleotide cycle form the mechanistic basis for DNA recombination by continuous HJ branch migration. Branch migration allows RuvC to scan DNA until it finds its consensus sequence, where it cleaves and resolves cruciform DNA. In Helicobacter hepaticus (strain ATCC 51449 / 3B1), this protein is Holliday junction branch migration complex subunit RuvB.